The chain runs to 395 residues: Formate-dependent phosphoribosylglycinamide formyltransferase (395 aa).

N(1)-(5-phospho-beta-D-ribosyl)glycinamide-binding positions include 22–23 (EL) and E82. ATP-binding positions include R115, K156, 161–166 (SSGKGQ), 196–199 (EGFI), and E204. In terms of domain architecture, ATP-grasp spans 120 to 309 (RLAAETLGLP…EFALHARAIL (190 aa)). Residues E268 and E280 each contribute to the Mg(2+) site. Residues D287, K356, and 363-364 (RR) contribute to the N(1)-(5-phospho-beta-D-ribosyl)glycinamide site.

This sequence belongs to the PurK/PurT family. In terms of assembly, homodimer.

The enzyme catalyses N(1)-(5-phospho-beta-D-ribosyl)glycinamide + formate + ATP = N(2)-formyl-N(1)-(5-phospho-beta-D-ribosyl)glycinamide + ADP + phosphate + H(+). It functions in the pathway purine metabolism; IMP biosynthesis via de novo pathway; N(2)-formyl-N(1)-(5-phospho-D-ribosyl)glycinamide from N(1)-(5-phospho-D-ribosyl)glycinamide (formate route): step 1/1. Functionally, involved in the de novo purine biosynthesis. Catalyzes the transfer of formate to 5-phospho-ribosyl-glycinamide (GAR), producing 5-phospho-ribosyl-N-formylglycinamide (FGAR). Formate is provided by PurU via hydrolysis of 10-formyl-tetrahydrofolate. The sequence is that of Formate-dependent phosphoribosylglycinamide formyltransferase from Stenotrophomonas maltophilia (strain R551-3).